Reading from the N-terminus, the 519-residue chain is Seed lectin (519 aa).

Intrachain disulfides connect C249/C258 and C274/C293. Ricin B-type lectin domains are found at residues E261 to G387 and V390 to F518. One copy of the 1-alpha repeat lies at D271–S311. A carbohydrate is bound by residues D276 to G279 and Q296 to N298. The stretch at L312–N352 is one 1-beta repeat. An intrachain disulfide couples C315 to C332. A 1-gamma repeat occupies E356 to N388. N370 carries an N-linked (GlcNAc...) asparagine glycan. The stretch at D401–V438 is one 2-alpha repeat. 2 disulfides stabilise this stretch: C404/C419 and C445/C464. One copy of the 2-beta repeat lies at R442–T482. A carbohydrate-binding positions include D454, D491–R494, H505–H508, and N512. The stretch at Q486–Q513 is one 2-gamma repeat.

The protein in the N-terminal section; belongs to the ribosome-inactivating protein family. Type 2 RIP subfamily. Heterotrimer consisting of Aalpha, Abeta and B chains with Abeta and B being disulfide-linked.

Functionally, seed lectin similar to type 2 ribosome-inactivating proteins. The Aalpha and Abeta chains constitute the rRNA glycosidase domain and the B chain the carbohydrate-binding lectin domain. Is predicted to have no glycosidase activity and, hence, to be non-toxic, due to small changes in both the nucleotide binding and carbohydrate binding capabilities. Binds galactose and derivatives with a preference for the beta-anomeric forms. Binds prophyrins. Has hemagglutinating activity towards rabbit and human erythrocytes. This is Seed lectin from Trichosanthes anguina (Snake gourd).